The chain runs to 281 residues: NADPH-dependent 7-cyano-7-deazaguanine reductase (281 aa).

88-90 (IES) is a substrate binding site. Residue 90–91 (SK) coordinates NADPH. C189 serves as the catalytic Thioimide intermediate. D196 serves as the catalytic Proton donor. 228–229 (HE) is a substrate binding site. Residue 257–258 (RG) coordinates NADPH.

Belongs to the GTP cyclohydrolase I family. QueF type 2 subfamily. In terms of assembly, homodimer.

It is found in the cytoplasm. The catalysed reaction is 7-aminomethyl-7-carbaguanine + 2 NADP(+) = 7-cyano-7-deazaguanine + 2 NADPH + 3 H(+). It participates in tRNA modification; tRNA-queuosine biosynthesis. Functionally, catalyzes the NADPH-dependent reduction of 7-cyano-7-deazaguanine (preQ0) to 7-aminomethyl-7-deazaguanine (preQ1). In Sodalis glossinidius (strain morsitans), this protein is NADPH-dependent 7-cyano-7-deazaguanine reductase.